The chain runs to 135 residues: Histone H2A.4 (135 aa).

It belongs to the histone H2A family. As to quaternary structure, the nucleosome is a histone octamer containing two molecules each of H2A, H2B, H3 and H4 assembled in one H3-H4 heterotetramer and two H2A-H2B heterodimers. The octamer wraps approximately 147 bp of DNA. In terms of tissue distribution, expressed preferentially in meristematic tissues of young seedlings, in stigma and ovary but not in pollen.

It localises to the nucleus. It is found in the chromosome. Functionally, core component of nucleosome. Nucleosomes wrap and compact DNA into chromatin, limiting DNA accessibility to the cellular machineries which require DNA as a template. Histones thereby play a central role in transcription regulation, DNA repair, DNA replication and chromosomal stability. DNA accessibility is regulated via a complex set of post-translational modifications of histones, also called histone code, and nucleosome remodeling. This Triticum aestivum (Wheat) protein is Histone H2A.4 (TH254).